A 78-amino-acid chain; its full sequence is MTLKVPCPQCQKTVVWQASSEFRPFCSKRCQLIDLGEWAEESHKISQNIQVDTVLSEEMLDAMEDEFLLNNKFFVEPE.

Cys7, Cys10, Cys26, and Cys30 together coordinate Zn(2+).

The protein belongs to the DNA gyrase inhibitor YacG family. In terms of assembly, interacts with GyrB. It depends on Zn(2+) as a cofactor.

Functionally, inhibits all the catalytic activities of DNA gyrase by preventing its interaction with DNA. Acts by binding directly to the C-terminal domain of GyrB, which probably disrupts DNA binding by the gyrase. The chain is DNA gyrase inhibitor YacG from Colwellia psychrerythraea (strain 34H / ATCC BAA-681) (Vibrio psychroerythus).